The following is a 193-amino-acid chain: Orotate phosphoribosyltransferase (193 aa).

116–124 (EDVVTTGKS) is a 5-phospho-alpha-D-ribose 1-diphosphate binding site. Thr120 and Arg148 together coordinate orotate.

Belongs to the purine/pyrimidine phosphoribosyltransferase family. PyrE subfamily. Homodimer. The cofactor is Mg(2+).

It catalyses the reaction orotidine 5'-phosphate + diphosphate = orotate + 5-phospho-alpha-D-ribose 1-diphosphate. The protein operates within pyrimidine metabolism; UMP biosynthesis via de novo pathway; UMP from orotate: step 1/2. Functionally, catalyzes the transfer of a ribosyl phosphate group from 5-phosphoribose 1-diphosphate to orotate, leading to the formation of orotidine monophosphate (OMP). In Clostridium tetani (strain Massachusetts / E88), this protein is Orotate phosphoribosyltransferase.